The primary structure comprises 90 residues: Small ribosomal subunit protein uS17 (90 aa).

Belongs to the universal ribosomal protein uS17 family. Part of the 30S ribosomal subunit.

Its function is as follows. One of the primary rRNA binding proteins, it binds specifically to the 5'-end of 16S ribosomal RNA. The sequence is that of Small ribosomal subunit protein uS17 from Burkholderia mallei (strain NCTC 10247).